Consider the following 260-residue polypeptide: Phosphate import ATP-binding protein PstB 1 (260 aa).

The ABC transporter domain occupies 13–255 (ISARDLNVHY…PQHPLTQGYI (243 aa)). ATP is bound at residue 45 to 52 (GPSGCGKS).

Belongs to the ABC transporter superfamily. Phosphate importer (TC 3.A.1.7) family. As to quaternary structure, the complex is composed of two ATP-binding proteins (PstB), two transmembrane proteins (PstC and PstA) and a solute-binding protein (PstS).

It is found in the cell inner membrane. The catalysed reaction is phosphate(out) + ATP + H2O = ADP + 2 phosphate(in) + H(+). Part of the ABC transporter complex PstSACB involved in phosphate import. Responsible for energy coupling to the transport system. The chain is Phosphate import ATP-binding protein PstB 1 from Paramagnetospirillum magneticum (strain ATCC 700264 / AMB-1) (Magnetospirillum magneticum).